A 98-amino-acid polypeptide reads, in one-letter code: uncharacterized protein (98 aa).

This is an uncharacterized protein from Dictyostelium discoideum (Social amoeba).